The sequence spans 180 residues: Transcription factor HES-7.1-A (180 aa).

The bHLH domain maps to H13–R70. The region spanning Y84–Q116 is the Orange domain. Positions W176–W179 match the WRPW motif motif.

Transcription repression requires formation of a complex with a corepressor protein of the Groucho/TLE family. As to expression, expressed in the presumptive midbrain-hindbrain boundary (MHB) as early as the early gastrula stage (stage 10.5). Expression in the MHB continues through to tailbud stage. Also transiently expressed in the eye anlage at late neurula stage.

It localises to the nucleus. In terms of biological role, transcriptional repressor. Represses transcription from both N box- and E box-containing promoters. Demarcates the prospective midbrain-hindbrain boundary (MHB) region in the neuroectoderm in early gastrulae embryos by repressing transcription of a number of target genes. This Xenopus laevis (African clawed frog) protein is Transcription factor HES-7.1-A (hes7.1-a).